The sequence spans 157 residues: Protein Smg (157 aa).

The protein belongs to the Smg family.

The protein is Protein Smg of Buchnera aphidicola subsp. Acyrthosiphon pisum (strain Tuc7).